The chain runs to 541 residues: uncharacterized protein (541 aa).

6 consecutive transmembrane segments (helical) span residues 57–77 (LVVTANLLGIGVALLLVTIAI), 90–110 (LTFGVVPGYVLLALALGSYAL), 144–164 (VGHLMFWGVGTALLTTLYGLI), 167–187 (AFIPRFLFAVSFCGVLVATAT), 221–241 (MVVWLLGSGVPVVGIALMAMF), and 257–277 (VLIISMVTLVFGFILMWILAW). The region spanning 278–329 (LTATPVRVVRAALRRVERGELRTNLVVFDGTELGELQRGFNAMVAGLRERER) is the HAMP domain. In terms of domain architecture, Guanylate cyclase spans 361–485 (AVVFIDIVGS…EPVNEAARLC (125 aa)).

This sequence belongs to the adenylyl cyclase class-3 family.

The protein resides in the cell membrane. This is an uncharacterized protein from Mycobacterium tuberculosis (strain CDC 1551 / Oshkosh).